Reading from the N-terminus, the 65-residue chain is Prokaryotic ubiquitin-like protein Pup (65 aa).

The tract at residues 1–38 (MANAQQQVFGGGGGDDAENNDAPQQGSGTQQVNVTGTD) is disordered. The interval 21-59 (DAPQQGSGTQQVNVTGTDDLLDEIDGLLETNAEEFVRSY) is ARC ATPase binding. Polar residues predominate over residues 22–34 (APQQGSGTQQVNV). At glutamine 65 the chain carries Deamidated glutamine. Glutamine 65 is covalently cross-linked (Isoglutamyl lysine isopeptide (Gln-Lys) (interchain with K-? in acceptor proteins)).

This sequence belongs to the prokaryotic ubiquitin-like protein family. Strongly interacts with the proteasome-associated ATPase ARC through a hydrophobic interface; the interacting region of Pup lies in its C-terminal half. There is one Pup binding site per ARC hexamer ring. Is modified by deamidation of its C-terminal glutamine to glutamate by the deamidase Dop, a prerequisite to the subsequent pupylation process.

Its pathway is protein degradation; proteasomal Pup-dependent pathway. Protein modifier that is covalently attached to lysine residues of substrate proteins, thereby targeting them for proteasomal degradation. The tagging system is termed pupylation. This chain is Prokaryotic ubiquitin-like protein Pup, found in Corynebacterium urealyticum (strain ATCC 43042 / DSM 7109).